We begin with the raw amino-acid sequence, 434 residues long: Adenylosuccinate synthetase (434 aa).

Residues 25 to 31 (GDEGKGK) and 53 to 55 (GHT) contribute to the GTP site. D26 serves as the catalytic Proton acceptor. Residues D26 and G53 each contribute to the Mg(2+) site. Residues 26 to 29 (DEGK), 51 to 54 (NAGH), T142, R156, N233, T248, and R312 contribute to the IMP site. The active-site Proton donor is the H54. Substrate is bound at residue 308 to 314 (VTTGRKR). GTP contacts are provided by residues R314, 340–342 (KLD), and 422–424 (GVG).

The protein belongs to the adenylosuccinate synthetase family. As to quaternary structure, homodimer. Mg(2+) serves as cofactor.

Its subcellular location is the cytoplasm. The catalysed reaction is IMP + L-aspartate + GTP = N(6)-(1,2-dicarboxyethyl)-AMP + GDP + phosphate + 2 H(+). It participates in purine metabolism; AMP biosynthesis via de novo pathway; AMP from IMP: step 1/2. Its activity is regulated as follows. Competitively Inhibited by GMP. Allosterically inhibited by AMP. Functionally, plays an important role in the de novo pathway and in the salvage pathway of purine nucleotide biosynthesis. Catalyzes the first committed step in the biosynthesis of AMP from IMP. The protein is Adenylosuccinate synthetase (ade2) of Schizosaccharomyces pombe (strain 972 / ATCC 24843) (Fission yeast).